The sequence spans 494 residues: Cytochrome P450 2A7 (494 aa).

Cys-439 lines the heme pocket.

The protein belongs to the cytochrome P450 family. The cofactor is heme.

The protein resides in the endoplasmic reticulum membrane. The protein localises to the microsome membrane. The enzyme catalyses an organic molecule + reduced [NADPH--hemoprotein reductase] + O2 = an alcohol + oxidized [NADPH--hemoprotein reductase] + H2O + H(+). Functionally, cytochromes P450 are a group of heme-thiolate monooxygenases. In liver microsomes, this enzyme is involved in an NADPH-dependent electron transport pathway. It oxidizes a variety of structurally unrelated compounds, including steroids, fatty acids, and xenobiotics. In Homo sapiens (Human), this protein is Cytochrome P450 2A7 (CYP2A7).